Consider the following 317-residue polypeptide: Acetyl-coenzyme A carboxylase carboxyl transferase subunit alpha (317 aa).

A CoA carboxyltransferase C-terminal domain is found at 39 to 293 (RLESKAAAAL…EEAIAEGLAG (255 aa)).

It belongs to the AccA family. Acetyl-CoA carboxylase is a heterohexamer composed of biotin carboxyl carrier protein (AccB), biotin carboxylase (AccC) and two subunits each of ACCase subunit alpha (AccA) and ACCase subunit beta (AccD).

The protein localises to the cytoplasm. The enzyme catalyses N(6)-carboxybiotinyl-L-lysyl-[protein] + acetyl-CoA = N(6)-biotinyl-L-lysyl-[protein] + malonyl-CoA. Its pathway is lipid metabolism; malonyl-CoA biosynthesis; malonyl-CoA from acetyl-CoA: step 1/1. Component of the acetyl coenzyme A carboxylase (ACC) complex. First, biotin carboxylase catalyzes the carboxylation of biotin on its carrier protein (BCCP) and then the CO(2) group is transferred by the carboxyltransferase to acetyl-CoA to form malonyl-CoA. The chain is Acetyl-coenzyme A carboxylase carboxyl transferase subunit alpha from Methylobacterium sp. (strain 4-46).